A 107-amino-acid polypeptide reads, in one-letter code: Integration host factor subunit alpha (107 aa).

This sequence belongs to the bacterial histone-like protein family. Heterodimer of an alpha and a beta chain.

Functionally, this protein is one of the two subunits of integration host factor, a specific DNA-binding protein that functions in genetic recombination as well as in transcriptional and translational control. This Bartonella tribocorum (strain CIP 105476 / IBS 506) protein is Integration host factor subunit alpha.